A 188-amino-acid chain; its full sequence is GMP synthase [glutamine-hydrolyzing] subunit A (188 aa).

The Glutamine amidotransferase type-1 domain occupies 3–188 (PLYVVNNYGQ…FSICTGQNKG (186 aa)). Cys75 serves as the catalytic Nucleophile. Active-site residues include His162 and Glu164.

As to quaternary structure, heterodimer composed of a glutamine amidotransferase subunit (A) and a GMP-binding subunit (B).

The catalysed reaction is XMP + L-glutamine + ATP + H2O = GMP + L-glutamate + AMP + diphosphate + 2 H(+). The protein operates within purine metabolism; GMP biosynthesis; GMP from XMP (L-Gln route): step 1/1. Its function is as follows. Catalyzes the synthesis of GMP from XMP. This is GMP synthase [glutamine-hydrolyzing] subunit A from Methanospirillum hungatei JF-1 (strain ATCC 27890 / DSM 864 / NBRC 100397 / JF-1).